Here is a 379-residue protein sequence, read N- to C-terminus: Glutamate 5-kinase (379 aa).

K14 contacts ATP. Substrate-binding residues include S54, D141, and N153. ATP is bound by residues 173–174 (TD) and 215–221 (TGGMATK). Positions 280-358 (KGRLLLDIGA…DEIEPLLGYD (79 aa)) constitute a PUA domain.

This sequence belongs to the glutamate 5-kinase family.

The protein localises to the cytoplasm. It carries out the reaction L-glutamate + ATP = L-glutamyl 5-phosphate + ADP. Its pathway is amino-acid biosynthesis; L-proline biosynthesis; L-glutamate 5-semialdehyde from L-glutamate: step 1/2. Its function is as follows. Catalyzes the transfer of a phosphate group to glutamate to form L-glutamate 5-phosphate. The sequence is that of Glutamate 5-kinase from Shewanella amazonensis (strain ATCC BAA-1098 / SB2B).